Consider the following 527-residue polypeptide: Probable protein kinase UbiB (527 aa).

The 405-residue stretch at 123–527 folds into the Protein kinase domain; the sequence is EFNETALASA…AIWLLIYLLS (405 aa). ATP is bound by residues 129–137 and Lys161; that span reads LASASIAQV. Residue Asp296 is the Proton acceptor of the active site. The chain crosses the membrane as a helical span at residues 506–526; the sequence is FTSFILGLCTGLAIWLLIYLL.

Belongs to the ABC1 family. UbiB subfamily.

The protein localises to the cell inner membrane. The protein operates within cofactor biosynthesis; ubiquinone biosynthesis [regulation]. Its function is as follows. Is probably a protein kinase regulator of UbiI activity which is involved in aerobic coenzyme Q (ubiquinone) biosynthesis. In Pasteurella multocida (strain Pm70), this protein is Probable protein kinase UbiB.